The following is a 188-amino-acid chain: V-type proton ATPase subunit E (188 aa).

It belongs to the V-ATPase E subunit family.

Functionally, produces ATP from ADP in the presence of a proton gradient across the membrane. The polypeptide is V-type proton ATPase subunit E (Dictyoglomus thermophilum (strain ATCC 35947 / DSM 3960 / H-6-12)).